The sequence spans 144 residues: Eukaryotic translation initiation factor 1A (144 aa).

Residues 1–15 show a composition bias toward basic residues; that stretch reads MPKNKGKGGKNRKRG. Disordered regions lie at residues 1–25 and 120–144; these read MPKN…DKRE and DVDG…IDKI. The span at 16–25 shows a compositional bias: basic and acidic residues; sequence KNEADDDKRE. Residues 22 to 96 enclose the S1-like domain; the sequence is DKRELVFKED…DKADVILKYM (75 aa).

This sequence belongs to the eIF-1A family.

In terms of biological role, seems to be required for maximal rate of protein biosynthesis. Enhances ribosome dissociation into subunits and stabilizes the binding of the initiator Met-tRNA(I) to 40 S ribosomal subunits. This is Eukaryotic translation initiation factor 1A from Triticum aestivum (Wheat).